The following is a 468-amino-acid chain: 6-phosphogluconate dehydrogenase, decarboxylating (468 aa).

NADP(+)-binding positions include 10 to 15 (GMAVMG), 33 to 35 (NRS), 74 to 76 (VKA), and Asn102. Substrate contacts are provided by residues Asn102 and 128-130 (SGG). Catalysis depends on Lys183, which acts as the Proton acceptor. Substrate is bound at residue 186 to 187 (HN). Glu190 (proton donor) is an active-site residue. Positions 191, 260, 287, 445, and 451 each coordinate substrate.

It belongs to the 6-phosphogluconate dehydrogenase family. Homodimer.

The catalysed reaction is 6-phospho-D-gluconate + NADP(+) = D-ribulose 5-phosphate + CO2 + NADPH. The protein operates within carbohydrate degradation; pentose phosphate pathway; D-ribulose 5-phosphate from D-glucose 6-phosphate (oxidative stage): step 3/3. In terms of biological role, catalyzes the oxidative decarboxylation of 6-phosphogluconate to ribulose 5-phosphate and CO(2), with concomitant reduction of NADP to NADPH. The sequence is that of 6-phosphogluconate dehydrogenase, decarboxylating (gnd) from Escherichia coli (strain K12).